The primary structure comprises 550 residues: Hydroxylamine reductase (550 aa).

[2Fe-2S] cluster-binding residues include cysteine 3, cysteine 6, cysteine 18, and cysteine 25. Residues histidine 249, glutamate 273, cysteine 317, cysteine 405, cysteine 433, cysteine 458, glutamate 492, and lysine 494 each contribute to the hybrid [4Fe-2O-2S] cluster site. Cysteine 405 bears the Cysteine persulfide mark.

The protein belongs to the HCP family. Requires [2Fe-2S] cluster as cofactor. It depends on hybrid [4Fe-2O-2S] cluster as a cofactor.

The protein resides in the cytoplasm. The enzyme catalyses A + NH4(+) + H2O = hydroxylamine + AH2 + H(+). In terms of biological role, catalyzes the reduction of hydroxylamine to form NH(3) and H(2)O. In Salmonella schwarzengrund (strain CVM19633), this protein is Hydroxylamine reductase.